Here is a 220-residue protein sequence, read N- to C-terminus: Ribosomal RNA small subunit methyltransferase G (220 aa).

S-adenosyl-L-methionine is bound by residues G78, F83, 129–130, and R146; that span reads GE.

It belongs to the methyltransferase superfamily. RNA methyltransferase RsmG family.

The protein resides in the cytoplasm. It carries out the reaction guanosine(527) in 16S rRNA + S-adenosyl-L-methionine = N(7)-methylguanosine(527) in 16S rRNA + S-adenosyl-L-homocysteine. Its function is as follows. Specifically methylates the N7 position of guanine in position 527 of 16S rRNA. The chain is Ribosomal RNA small subunit methyltransferase G from Geobacter metallireducens (strain ATCC 53774 / DSM 7210 / GS-15).